The primary structure comprises 174 residues: Vimentin-type intermediate filament-associated coiled-coil protein (174 aa).

The stretch at 7-97 (LQIREANAHL…DQRDQMIQQL (91 aa)) forms a coiled coil. The interval 128 to 174 (GPLPASHSHRAQLLPDGPGPPLGNNMGKEEGQDDQDDQQPAVFGTTV) is disordered.

Its subcellular location is the cytoplasm. This is Vimentin-type intermediate filament-associated coiled-coil protein (Vmac) from Mus musculus (Mouse).